The primary structure comprises 61 residues: Small ribosomal subunit protein uS14 (61 aa).

Zn(2+) contacts are provided by Cys-24, Cys-27, Cys-40, and Cys-43.

It belongs to the universal ribosomal protein uS14 family. Zinc-binding uS14 subfamily. As to quaternary structure, part of the 30S ribosomal subunit. Contacts proteins S3 and S10. Zn(2+) serves as cofactor.

Functionally, binds 16S rRNA, required for the assembly of 30S particles and may also be responsible for determining the conformation of the 16S rRNA at the A site. This is Small ribosomal subunit protein uS14 from Syntrophotalea carbinolica (strain DSM 2380 / NBRC 103641 / GraBd1) (Pelobacter carbinolicus).